The sequence spans 3381 residues: Versican core protein (3381 aa).

The first 20 residues, 1-20 (MLINIKSILWMCSTLIAAHA), serve as a signal peptide directing secretion. Residues 21-147 (LQKVNMEKSP…EDTQDTVSLT (127 aa)) enclose the Ig-like V-type domain. Intrachain disulfides connect cysteine 44–cysteine 131, cysteine 173–cysteine 244, cysteine 197–cysteine 218, cysteine 271–cysteine 346, and cysteine 295–cysteine 316. Asparagine 57 carries an N-linked (GlcNAc...) asparagine glycan. Link domains are found at residues 151–246 (VVFH…YCYV) and 252–348 (DVFH…YCFK). Residues asparagine 331 and asparagine 352 are each glycosylated (N-linked (GlcNAc...) asparagine). The segment at 349-1336 (PKQNISEATT…IIEVRENKTG (988 aa)) is GAG-alpha (glucosaminoglycan attachment domain). The span at 417 to 427 (PLTSTHRSATE) shows a compositional bias: polar residues. Disordered stretches follow at residues 417–437 (PLTS…SMKK) and 603–623 (ESVS…MDHR). The O-linked (Xyl...) (chondroitin sulfate) serine glycan is linked to serine 660. Residues 816 to 866 (DNTTSKPLGSTEHVGSPKLPPALITTTGVSGKDKEMPSLTEDGRDEFTRIP) are disordered. A glycan (N-linked (GlcNAc...) asparagine) is linked at asparagine 817. The segment covering 846 to 863 (GKDKEMPSLTEDGRDEFT) has biased composition (basic and acidic residues). 2 N-linked (GlcNAc...) asparagine glycosylation sites follow: asparagine 965 and asparagine 1017. Over residues 1043–1052 (EDFLWKEQTP) the composition is skewed to basic and acidic residues. Disordered stretches follow at residues 1043–1081 (EDFL…SDGS) and 1218–1244 (FSSA…PDEE). N-linked (GlcNAc...) asparagine glycosylation is present at asparagine 1333. Residues 1337 to 3074 (RMSDFSVSGH…VEGTAVYLPG (1738 aa)) form a GAG-beta region. Residues 1338-1362 (MSDFSVSGHPIDSESKEDEPCSEET) form a disordered region. The span at 1352 to 1362 (SKEDEPCSEET) shows a compositional bias: acidic residues. Asparagine 1393 is a glycosylation site (N-linked (GlcNAc...) asparagine). Basic and acidic residues predominate over residues 1417 to 1428 (KDPEAAEARRGQ). Disordered regions lie at residues 1417-1446 (KDPE…ESDS), 1455-1474 (GLPT…SLEI), and 1484-1512 (TAEP…GPDS). Asparagine 1437 and asparagine 1463 each carry an N-linked (GlcNAc...) asparagine glycan. O-linked (Xyl...) (chondroitin sulfate) serine glycosylation is found at serine 1539 and serine 1621. Asparagine 1653 is a glycosylation site (N-linked (GlcNAc...) asparagine). The tract at residues 1708-1785 (PPLEETTRKE…ERETTSSTVV (78 aa)) is disordered. A compositionally biased stretch (basic and acidic residues) spans 1712–1721 (ETTRKEEEKG). A compositionally biased stretch (polar residues) spans 1726–1738 (ASTVEVHSPTQRL). The span at 1743–1761 (SPSELESSSETPPDDSAAA) shows a compositional bias: low complexity. The span at 1764-1784 (KSFTSQMTPTQSERETTSSTV) shows a compositional bias: polar residues. Residues serine 1928 and serine 1952 are each glycosylated (O-linked (Xyl...) (chondroitin sulfate) serine). The span at 1964–1976 (PSVTPTSDLSNHT) shows a compositional bias: polar residues. Disordered stretches follow at residues 1964–1986 (PSVT…GSTL) and 2041–2126 (EGAI…QSSV). 4 N-linked (GlcNAc...) asparagine glycosylation sites follow: asparagine 1974, asparagine 2045, asparagine 2074, and asparagine 2103. The span at 2065 to 2075 (STEEGEVKENH) shows a compositional bias: basic and acidic residues. Serine 2109 is subject to Phosphoserine. O-linked (Xyl...) (chondroitin sulfate) serine glycans are attached at residues serine 2240 and serine 2247. N-linked (GlcNAc...) asparagine glycans are attached at residues asparagine 2263, asparagine 2290, and asparagine 2356. 3 disordered regions span residues 2338–2388 (EGPF…AETK), 2490–2512 (EQRE…EKAT), and 2594–2615 (TDLD…TQVQ). Polar residues-rich tracts occupy residues 2345–2357 (LTFS…PQNQ) and 2367–2383 (TSRP…ENSV). Residues serine 2607 and serine 2608 each carry the phosphoserine modification. Phosphothreonine is present on threonine 2612. Residues asparagine 2623 and asparagine 2641 are each glycosylated (N-linked (GlcNAc...) asparagine). Serine 2714, serine 2715, and serine 2759 each carry an O-linked (Xyl...) (chondroitin sulfate) serine glycan. The disordered stretch occupies residues 2819–2893 (PPLSIHLGSG…EPSEDESKPK (75 aa)). Residues 2840-2851 (ALPSTDASTPPV) are compositionally biased toward polar residues. Residues asparagine 2919 and asparagine 3052 are each glycosylated (N-linked (GlcNAc...) asparagine). Residues 3074-3110 (GPDRCKMNPCLNGGTCYPTETSYVCTCVPGYSGDRCE) enclose the EGF-like 1 domain. Disulfide bonds link cysteine 3078/cysteine 3089, cysteine 3083/cysteine 3098, cysteine 3100/cysteine 3109, cysteine 3116/cysteine 3127, cysteine 3121/cysteine 3136, cysteine 3138/cysteine 3147, cysteine 3154/cysteine 3165, cysteine 3182/cysteine 3274, cysteine 3250/cysteine 3266, cysteine 3281/cysteine 3324, and cysteine 3310/cysteine 3337. The EGF-like 2; calcium-binding domain maps to 3112–3148 (DFDECHSNPCRNGATCIDGFNTFRCLCLPSYVGALCE). The C-type lectin domain occupies 3161-3275 (FQGQCYKYFA…CNYHLTYTCK (115 aa)). Positions 3279–3339 (VACGQPPVVE…WAMPKITCLN (61 aa)) constitute a Sushi domain. Asparagine 3354 and asparagine 3364 each carry an N-linked (GlcNAc...) asparagine glycan. Residues 3355–3365 (SSSAKDNSINT) are compositionally biased toward polar residues. The tract at residues 3355–3381 (SSSAKDNSINTSKHDHRWSRRWQESRR) is disordered.

The protein belongs to the aggrecan/versican proteoglycan family. In terms of assembly, interacts with FBLN1. Post-translationally, phosphorylated by FAM20C in the extracellular medium. In terms of processing, proteolytically cleaved by ADAMTS5 and ADAMTS15 in the pericellular matrix surrounding myoblasts, facilitating myoblast contact and fusion which is required for skeletal muscle development and regeneration. As to expression, cerebral white matter. Isoform V0 and isoform V1 are expressed in the central nervous system, and in a number of mesenchymal and epithelial tissues; the major isoform V2 is restricted to the central nervous system.

It is found in the secreted. The protein localises to the extracellular space. Its subcellular location is the extracellular matrix. The protein resides in the cell projection. It localises to the cilium. It is found in the photoreceptor outer segment. The protein localises to the interphotoreceptor matrix. Its function is as follows. May play a role in intercellular signaling and in connecting cells with the extracellular matrix. May take part in the regulation of cell motility, growth and differentiation. Binds hyaluronic acid. The chain is Versican core protein (VCAN) from Bos taurus (Bovine).